The following is a 282-amino-acid chain: MVGKISSDLPPGFRFHPTDEELIMYYLRYQATSRPCPVSIIPEIDVYKFDPWVLPEKAEFGDNEWYFFTPRDRKYPNGVRPNRAAVSGYWKATGTDKAIYSANKYVGIKKALVFYKGKPPKGVKTDWIMHEYRLSDSKSQTSKQSGSMRLDDWVLCRIYKKKNLGRTIEMMKVEEEELEAQNVSTTNNEIEVVGGPQTMKLPRICSLSHLLELDYFGSIPQLLSDNLLYDDQGYTMNNVNNTSNVDQVSSQQQNTNNITSNNCNIFFNYQQPLFVNPTFQSQ.

One can recognise an NAC domain in the interval 9–161 (LPPGFRFHPT…DWVLCRIYKK (153 aa)). The DNA-binding element occupies 106 to 167 (VGIKKALVFY…IYKKKNLGRT (62 aa)). A coiled-coil region spans residues 161-188 (KKNLGRTIEMMKVEEEELEAQNVSTTNN).

Expressed in roots, stem, flowers, and leaves.

The protein localises to the nucleus. Transcription factor that binds DNA motifs 5'-CGT[AG](5N)NACG[ACT][AC][AT][ACG][ACT]-3' and 5'-CACG[ACT][AC][AT][AGT][CT]-3' in target genes promoters. Promotes leaf senescence and reduces fruit yield and sugar content, probably by establishing abscisic acid (ABA) homeostasis. This chain is NAC domain-containing protein 1, found in Solanum lycopersicum (Tomato).